A 492-amino-acid chain; its full sequence is UPF0652 protein C22H10.08 (492 aa).

It belongs to the UPF0652 family.

Its subcellular location is the cytoplasm. It is found in the nucleus. The protein is UPF0652 protein C22H10.08 of Schizosaccharomyces pombe (strain 972 / ATCC 24843) (Fission yeast).